A 412-amino-acid polypeptide reads, in one-letter code: rRNA methyltransferase 1, mitochondrial (412 aa).

Residues 1 to 20 constitute a mitochondrion transit peptide; the sequence is MTSLTNAVFKRYLAVTPSAH.

Belongs to the class IV-like SAM-binding methyltransferase superfamily. RNA methyltransferase TrmH family.

It is found in the mitochondrion. The catalysed reaction is guanosine(2270) in 21S rRNA + S-adenosyl-L-methionine = 2'-O-methylguanosine(2270) in 21S rRNA + S-adenosyl-L-homocysteine + H(+). Its function is as follows. S-adenosyl-L-methionine-dependent 2'-O-ribose methyltransferase that catalyzes the formation of 2'-O-methylguanosine at position 2270 (Gm2270) in the 21S mitochondrial large subunit ribosomal RNA (mtLSU rRNA), a universally conserved modification in the peptidyl transferase domain of the mtLSU rRNA. This modification seems to be important for the normal accumulation of the mitochondrial large ribosomal subunit. The polypeptide is rRNA methyltransferase 1, mitochondrial (Saccharomyces cerevisiae (strain ATCC 204508 / S288c) (Baker's yeast)).